Reading from the N-terminus, the 255-residue chain is Pyridoxine 5'-phosphate synthase (255 aa).

Position 12 (Asn-12) interacts with 3-amino-2-oxopropyl phosphate. 14 to 15 contributes to the 1-deoxy-D-xylulose 5-phosphate binding site; it reads DH. Arg-23 is a binding site for 3-amino-2-oxopropyl phosphate. The active-site Proton acceptor is His-48. Positions 50 and 55 each coordinate 1-deoxy-D-xylulose 5-phosphate. The active-site Proton acceptor is the Glu-75. Thr-105 serves as a coordination point for 1-deoxy-D-xylulose 5-phosphate. The active-site Proton donor is His-199. 3-amino-2-oxopropyl phosphate is bound by residues Gly-200 and 221–222; that span reads GF.

It belongs to the PNP synthase family. Homooctamer; tetramer of dimers.

It is found in the cytoplasm. The enzyme catalyses 3-amino-2-oxopropyl phosphate + 1-deoxy-D-xylulose 5-phosphate = pyridoxine 5'-phosphate + phosphate + 2 H2O + H(+). Its pathway is cofactor biosynthesis; pyridoxine 5'-phosphate biosynthesis; pyridoxine 5'-phosphate from D-erythrose 4-phosphate: step 5/5. Functionally, catalyzes the complicated ring closure reaction between the two acyclic compounds 1-deoxy-D-xylulose-5-phosphate (DXP) and 3-amino-2-oxopropyl phosphate (1-amino-acetone-3-phosphate or AAP) to form pyridoxine 5'-phosphate (PNP) and inorganic phosphate. The sequence is that of Pyridoxine 5'-phosphate synthase from Rhodopseudomonas palustris (strain BisB18).